The sequence spans 302 residues: Stanniocalcin-2 (302 aa).

The N-terminal stretch at 1–24 is a signal peptide; it reads MCAERLGQFMTLALVLATFDPARG. Residues 23–44 are disordered; sequence RGTDATNPPEGPQDRSPQQKGR. 2 N-linked (GlcNAc...) asparagine glycosylation sites follow: Asn73 and Asn74. The tract at residues 217 to 302 is disordered; sequence RPPTAPPERQ…EQSEYSDIRR (86 aa). Basic and acidic residues predominate over residues 227–264; it reads PQVDRTKLSRAHHGEAGHHLPEPSSRETGRGAKGERGS. Residues Ser250 and Ser251 each carry the phosphoserine modification. Position 254 is a phosphothreonine (Thr254).

Belongs to the stanniocalcin family. As to quaternary structure, homodimer; disulfide-linked.

The protein localises to the secreted. Functionally, has an anti-hypocalcemic action on calcium and phosphate homeostasis. This chain is Stanniocalcin-2 (STC2), found in Pongo abelii (Sumatran orangutan).